A 295-amino-acid polypeptide reads, in one-letter code: MQSSLAVNEKVEILAEALPYIRRFHNKTIVIKYGGNAMTEEILKQSFAKDVVLLKLVGMNPVIVHGGGPQIDSMLKRVGKEGVFIQGMRVTDAETMDIVEMILGGLINKEIVNLINRHGGQAVGLTGKDGMFIRAKRMLIKDKEDAEKWINIGQVGEIEYIDPSLIKLLDARDFIPVIAPIGVGEEGESYNINADLVAGRLAETLKAEKLILMTNTPGVLDKNGNLLTGLTASRVDELFADGTISGGMLPKIKSALDAVKNGVKSCHIIDGRVQHALLLEILTDEGVGTLIKSEG.

Residues 67-68 (GG), Arg89, and Asn191 contribute to the substrate site.

Belongs to the acetylglutamate kinase family. ArgB subfamily.

The protein localises to the cytoplasm. It carries out the reaction N-acetyl-L-glutamate + ATP = N-acetyl-L-glutamyl 5-phosphate + ADP. It functions in the pathway amino-acid biosynthesis; L-arginine biosynthesis; N(2)-acetyl-L-ornithine from L-glutamate: step 2/4. Functionally, catalyzes the ATP-dependent phosphorylation of N-acetyl-L-glutamate. The chain is Acetylglutamate kinase from Nitrosomonas eutropha (strain DSM 101675 / C91 / Nm57).